The following is a 406-amino-acid chain: COP9 signalosome complex subunit 4 (406 aa).

An N-acetylalanine modification is found at Ala-2. Lys-25 is subject to N6-acetyllysine. The PCI domain occupies 197–366 (YRRKFIEAAQ…GIVHFETREA (170 aa)).

This sequence belongs to the CSN4 family. As to quaternary structure, component of the CSN complex, composed of COPS1/GPS1, COPS2, COPS3, COPS4, COPS5, COPS6, COPS7 (COPS7A or COPS7B), COPS8 and COPS9. In the complex, it probably interacts directly with COPS1, COPS2, COPS3, COPS5, COPS6, COPS7 (COPS7A or COPS7B) and COPS8. Interacts with TOR1A; the interaction is direct and associates TOR1A and SNAPIN with the CSN complex. Interacts with STON2; controls STON2 neddylation levels. Interacts with ERCC6.

The protein resides in the cytoplasm. It localises to the nucleus. Its subcellular location is the cytoplasmic vesicle. The protein localises to the secretory vesicle. It is found in the synaptic vesicle. In terms of biological role, component of the COP9 signalosome complex (CSN), a complex involved in various cellular and developmental processes. The CSN complex is an essential regulator of the ubiquitin (Ubl) conjugation pathway by mediating the deneddylation of the cullin subunits of SCF-type E3 ligase complexes, leading to decrease the Ubl ligase activity of SCF-type complexes such as SCF, CSA or DDB2. Also involved in the deneddylation of non-cullin subunits such as STON2. The complex is also involved in phosphorylation of p53/TP53, c-jun/JUN, IkappaBalpha/NFKBIA, ITPK1, IRF8/ICSBP and SNAPIN, possibly via its association with CK2 and PKD kinases. CSN-dependent phosphorylation of TP53 and JUN promotes and protects degradation by the Ubl system, respectively. The chain is COP9 signalosome complex subunit 4 (Cops4) from Rattus norvegicus (Rat).